The following is a 121-amino-acid chain: Large ribosomal subunit protein bL20 (121 aa).

It belongs to the bacterial ribosomal protein bL20 family.

Its function is as follows. Binds directly to 23S ribosomal RNA and is necessary for the in vitro assembly process of the 50S ribosomal subunit. It is not involved in the protein synthesizing functions of that subunit. The protein is Large ribosomal subunit protein bL20 of Moorella thermoacetica (strain ATCC 39073 / JCM 9320).